The sequence spans 330 residues: Endochitinase Ziz m 1.0101 (330 aa).

The signal sequence occupies residues 1-24 (MVPQAKLVVASLILTSALIQTSEA). The GH18 domain occupies 26-330 (GGIATYWGQY…LRTKFMYQNA (305 aa)). Cystine bridges form between C47/C90, C77/C80, and C187/C219. The interval 72-86 (NISGHCSDCTFLGEE) is binds to IgE in 70% of the 10 patients tested allergic to Indian jujube and latex. Residues 292–301 (VWNRYYDLKT) form a binds to IgE in 100% of the 10 patients tested allergic to Indian jujube and latex; sufficient for prediction of the presence of allergic reactions in these patients region. Binds to IgE in 70% of the 10 patients tested allergic to Indian jujube and latex regions lie at residues 300-311 (KTNYSSSIILEY) and 309-320 (LEYVNSGTKYLP).

Belongs to the glycosyl hydrolase 18 family. Chitinase class II subfamily.

Its subcellular location is the secreted. The enzyme catalyses Random endo-hydrolysis of N-acetyl-beta-D-glucosaminide (1-&gt;4)-beta-linkages in chitin and chitodextrins.. Defense against chitin containing fungal pathogens. This chain is Endochitinase Ziz m 1.0101, found in Ziziphus mauritiana (Indian jujube).